The chain runs to 222 residues: Putative germin-like protein subfamily 1 member 9 (222 aa).

The first 22 residues, 1–22, serve as a signal peptide directing secretion; sequence MKSFSFLAVLSILAITLSLSKA. Residues Cys32 and Cys49 are joined by a disulfide bond. Residues 63-213 enclose the Cupin type-1 domain; the sequence is TGLHEARPPN…AFQVDPKIVM (151 aa). Asn78 is a glycosylation site (N-linked (GlcNAc...) asparagine). Residues His111, His113, Glu118, and His159 each coordinate Mn(2+).

It belongs to the germin family. In terms of assembly, oligomer (believed to be a pentamer but probably hexamer).

It is found in the secreted. Its subcellular location is the extracellular space. The protein localises to the apoplast. May play a role in plant defense. Probably has no oxalate oxidase activity even if the active site is conserved. The chain is Putative germin-like protein subfamily 1 member 9 from Arabidopsis thaliana (Mouse-ear cress).